The sequence spans 325 residues: Probable isoaspartyl peptidase/L-asparaginase GA20639 (325 aa).

Thr-184 functions as the Nucleophile in the catalytic mechanism. Substrate-binding positions include 212-215 (RIGD) and 235-238 (TGHG).

The protein belongs to the Ntn-hydrolase family. As to quaternary structure, heterodimer of an alpha and beta chain produced by autocleavage. Cleaved into an alpha and beta chain by autocatalysis; this activates the enzyme. The N-terminal residue of the beta subunit is responsible for the nucleophile hydrolase activity.

It catalyses the reaction L-asparagine + H2O = L-aspartate + NH4(+). It carries out the reaction Cleavage of a beta-linked Asp residue from the N-terminus of a polypeptide.. Its function is as follows. Has both L-asparaginase and beta-aspartyl peptidase activity. Does not have aspartylglucosaminidase activity and is inactive toward GlcNAc-L-Asn. Likewise, has no activity toward glutamine. This chain is Probable isoaspartyl peptidase/L-asparaginase GA20639, found in Drosophila pseudoobscura pseudoobscura (Fruit fly).